The sequence spans 270 residues: Putative phosphoenolpyruvate synthase regulatory protein (270 aa).

150 to 157 provides a ligand contact to ADP; that stretch reads GVSRCGKT.

This sequence belongs to the pyruvate, phosphate/water dikinase regulatory protein family. PSRP subfamily.

The enzyme catalyses [pyruvate, water dikinase] + ADP = [pyruvate, water dikinase]-phosphate + AMP + H(+). It catalyses the reaction [pyruvate, water dikinase]-phosphate + phosphate + H(+) = [pyruvate, water dikinase] + diphosphate. In terms of biological role, bifunctional serine/threonine kinase and phosphorylase involved in the regulation of the phosphoenolpyruvate synthase (PEPS) by catalyzing its phosphorylation/dephosphorylation. The polypeptide is Putative phosphoenolpyruvate synthase regulatory protein (Shewanella baltica (strain OS223)).